Consider the following 1102-residue polypeptide: Protein MMS22-like (1102 aa).

It belongs to the MMS22 family. MMS22L subfamily.

The protein resides in the nucleus. It is found in the chromosome. In terms of biological role, involved in recombination-dependent repair of stalled or collapsed replication forks. The polypeptide is Protein MMS22-like (Drosophila melanogaster (Fruit fly)).